We begin with the raw amino-acid sequence, 194 residues long: DNA replication complex GINS protein PSF3 (194 aa).

This sequence belongs to the GINS3/PSF3 family. Component of the GINS complex which is a heterotetramer of SLD5, PSF1, PSF2 and PSF3.

It is found in the nucleus. Functionally, functions as part of the GINS complex which plays an essential role in the initiation of DNA replication by binding to DNA replication origins and facilitating the assembly of the DNA replication machinery. The protein is DNA replication complex GINS protein PSF3 of Saccharomyces cerevisiae (strain ATCC 204508 / S288c) (Baker's yeast).